Consider the following 357-residue polypeptide: MKGNVLIMAGGTGGHVFPALACAREFQARGYAVHWLGTPRGIENDLVPKAGLPLHLIQVSGLRGKGLKSLVKAPLELLKSLFQALRVIRQLRPVCVLGLGGYVTGPGGLAARLNGVPLVIHEQNAVAGTANRSLAPIARRVCEAFPDTFPASDKRLTTGNPVRGELFLDAHARAPLTGRRVNLLVLGGSLGAEPLNKLLPEALAQVPLEIRPAIRHQAGRQHAEITAERYRTVAVEADVAPFISDMAAAYAWADLVICRAGALTVSELAAAGLPAFLVPLPHAIDDHQTRNAEFLVRSGAGRLLPQKSTGAAELAAQLSEVLMHPETLRSMADQARSLAKPEATRTVVDACLEVARG.

Residues 12–14 (TGG), Asn124, Arg163, Ser189, Ile243, 262–267 (ALTVSE), and Gln288 each bind UDP-N-acetyl-alpha-D-glucosamine.

The protein belongs to the glycosyltransferase 28 family. MurG subfamily.

Its subcellular location is the cell inner membrane. It carries out the reaction di-trans,octa-cis-undecaprenyl diphospho-N-acetyl-alpha-D-muramoyl-L-alanyl-D-glutamyl-meso-2,6-diaminopimeloyl-D-alanyl-D-alanine + UDP-N-acetyl-alpha-D-glucosamine = di-trans,octa-cis-undecaprenyl diphospho-[N-acetyl-alpha-D-glucosaminyl-(1-&gt;4)]-N-acetyl-alpha-D-muramoyl-L-alanyl-D-glutamyl-meso-2,6-diaminopimeloyl-D-alanyl-D-alanine + UDP + H(+). It functions in the pathway cell wall biogenesis; peptidoglycan biosynthesis. Functionally, cell wall formation. Catalyzes the transfer of a GlcNAc subunit on undecaprenyl-pyrophosphoryl-MurNAc-pentapeptide (lipid intermediate I) to form undecaprenyl-pyrophosphoryl-MurNAc-(pentapeptide)GlcNAc (lipid intermediate II). This chain is UDP-N-acetylglucosamine--N-acetylmuramyl-(pentapeptide) pyrophosphoryl-undecaprenol N-acetylglucosamine transferase, found in Pseudomonas paraeruginosa (strain DSM 24068 / PA7) (Pseudomonas aeruginosa (strain PA7)).